A 422-amino-acid chain; its full sequence is Interleukin-11 receptor subunit alpha (422 aa).

An N-terminal signal peptide occupies residues 1 to 22; the sequence is MSSSCSGLSRVLVAVATALVSA. The Extracellular portion of the chain corresponds to 24–370; it reads SPCPQAWGPP…DSVEQVAVLA (347 aa). The Ig-like C2-type domain occupies 27–110; sequence PQAWGPPGVQ…LGGTVTLQLG (84 aa). Cystine bridges form between Cys-48–Cys-94, Cys-120–Cys-130, and Cys-170–Cys-180. 2 consecutive Fibronectin type-III domains span residues 112–219 and 220–317; these read PPAR…LRPD and PPQG…TPST. Residue Asn-127 is glycosylated (N-linked (GlcNAc...) asparagine). Asn-194 carries N-linked (GlcNAc...) asparagine glycosylation. Residues 304–308 carry the WSXWS motif motif; the sequence is WSTWS. The disordered stretch occupies residues 335–355; sequence EVEPQVDSPAPPRPSLQPHPR. A helical transmembrane segment spans residues 371-391; that stretch reads SLGILSFLGLVAGALALGLWL. Over 392 to 422 the chain is Cytoplasmic; the sequence is RLRRGGKDGSPKPGFLASVIPVDRRPGAPNL. The segment at 398-422 is disordered; it reads KDGSPKPGFLASVIPVDRRPGAPNL. Over residues 413–422 the composition is skewed to basic and acidic residues; the sequence is VDRRPGAPNL.

Belongs to the type I cytokine receptor family. Type 3 subfamily. In terms of assembly, on IL11 binding, forms a multimer complex with IL6ST/gp130. Post-translationally, a short soluble form is also released from the membrane by proteolysis. The sIL11RA is formed either by limited proteolysis of membrane-bound receptors, a process referred to as ectodomain shedding, or directly secreted from the cells after alternative mRNA splicing. mIL11RA is cleaved by the proteases ADAM10, ELANE and PRTN3. In terms of tissue distribution, expressed in a number of cell lines, including the myelogenous leukemia cell line K-562, the megakaryocytic leukemia cell line M-07e, the erythroleukemia cell line TF-1, and the osteosarcoma cell lines, MG-63 and SaOS-2. Also expressed in normal and malignant prostate epithelial cell lines. Expression levels are increased in prostate carcinoma.

It localises to the membrane. It is found in the secreted. Its function is as follows. Receptor for interleukin-11 (IL11). The receptor systems for IL6, LIF, OSM, CNTF, IL11 and CT1 can utilize IL6ST for initiating signal transmission. The IL11/IL11RA/IL6ST complex may be involved in the control of proliferation and/or differentiation of skeletogenic progenitor or other mesenchymal cells. Essential for the normal development of craniofacial bones and teeth. Restricts suture fusion and tooth number. In terms of biological role, soluble form of IL11 receptor (sIL11RA) that acts as an agonist of IL11 activity. The IL11:sIL11RA complex binds to IL6ST/gp130 on cell surfaces and induces signaling also on cells that do not express membrane-bound IL11RA in a process called IL11 trans-signaling. This Homo sapiens (Human) protein is Interleukin-11 receptor subunit alpha.